The sequence spans 209 residues: Chalcone isomerase-like protein 2 (209 aa).

This sequence belongs to the chalcone isomerase family. Component an active demethylxanthohumol (DMX) biosynthetic metabolon in glandular trichomes (lupulin glands) that encompasses a chalcone synthase (CHS) and a membrane-bound prenyltransferase. Interacts with CHS_H1 and PT1L. In terms of tissue distribution, mostly expressed in glandular trichomes (lupulin glands), and, to a lower extent, in cones, cones bracts, leaves, stems and roots.

It localises to the cytoplasm. It catalyses the reaction a chalcone = a flavanone.. It functions in the pathway secondary metabolite biosynthesis; flavonoid biosynthesis. In terms of biological role, involved in the biosynthesis of prenylated phenolics natural products which contribute to the bitter taste of beer and display broad biological activities. Involved in anthocyanin biosynthesis. Polyketide binding proteins (PBP) which promotes the catalytic activities of CHS_H1 and PT1L and triggers demethylxanthohumol (DMX) production. The protein is Chalcone isomerase-like protein 2 of Humulus lupulus (European hop).